A 708-amino-acid chain; its full sequence is Leukotoxin translocation ATP-binding protein LktB (708 aa).

In terms of domain architecture, Peptidase C39 spans 1-126; it reads MEANHQRNDL…ACYQGQLILV (126 aa). Positions 155 to 437 constitute an ABC transmembrane type-1 domain; it reads FLETLIVSIF…LAQLWQDFQQ (283 aa). Helical transmembrane passes span 159 to 179, 192 to 212, 270 to 290, 296 to 316, and 389 to 409; these read LIVS…FQVV, LNII…LSGL, ALTS…MWYY, LVIL…SPIL, and VMVI…LSIG. An ABC transporter domain is found at 469–704; it reads ISFKNIRFRY…SNGLYSYLHQ (236 aa). 503 to 510 is an ATP binding site; it reads GRSGSGKS.

Belongs to the ABC transporter superfamily. Protein-1 exporter (TC 3.A.1.109) family. As to quaternary structure, homodimer.

Its subcellular location is the cell inner membrane. The catalysed reaction is ATP + H2O + proteinSide 1 = ADP + phosphate + proteinSide 2.. Functionally, part of the ABC transporter complex LktBD involved in leukotoxin export. Transmembrane domains (TMD) form a pore in the inner membrane and the ATP-binding domain (NBD) is responsible for energy generation. The protein is Leukotoxin translocation ATP-binding protein LktB (lktB) of Mannheimia haemolytica (Pasteurella haemolytica).